The chain runs to 458 residues: Argininosuccinate lyase (458 aa).

The protein belongs to the lyase 1 family. Argininosuccinate lyase subfamily.

It localises to the cytoplasm. The catalysed reaction is 2-(N(omega)-L-arginino)succinate = fumarate + L-arginine. It participates in amino-acid biosynthesis; L-arginine biosynthesis; L-arginine from L-ornithine and carbamoyl phosphate: step 3/3. In Actinobacillus pleuropneumoniae serotype 3 (strain JL03), this protein is Argininosuccinate lyase.